Reading from the N-terminus, the 439-residue chain is Potassium/proton antiporter CemA (439 aa).

The next 6 helical transmembrane spans lie at 55-75 (IMLY…WSLL), 79-99 (ISLF…NFFN), 220-240 (YMLF…IWFL), 317-337 (LLHL…FILG), 364-384 (ILLL…EIVI), and 399-419 (IISC…KYWI).

It belongs to the CemA family.

The protein localises to the plastid. It localises to the chloroplast inner membrane. It carries out the reaction K(+)(in) + H(+)(out) = K(+)(out) + H(+)(in). Its function is as follows. Contributes to K(+)/H(+) antiport activity by supporting proton efflux to control proton extrusion and homeostasis in chloroplasts in a light-dependent manner to modulate photosynthesis. Prevents excessive induction of non-photochemical quenching (NPQ) under continuous-light conditions. Indirectly promotes efficient inorganic carbon uptake into chloroplasts. This Physcomitrium patens (Spreading-leaved earth moss) protein is Potassium/proton antiporter CemA.